We begin with the raw amino-acid sequence, 179 residues long: FAD-dependent monooxygenase nscC (179 aa).

A signal peptide spans Met-1–Ser-21. 2 residues coordinate FAD: Glu-35 and Ala-46. The N-linked (GlcNAc...) asparagine glycan is linked to Asn-92. Arg-119 contacts FAD. A glycan (N-linked (GlcNAc...) asparagine) is linked at Asn-170.

It belongs to the paxM FAD-dependent monooxygenase family. It depends on FAD as a cofactor.

The protein operates within secondary metabolite biosynthesis. Functionally, FAD-dependent monooxygenase; part of the gene cluster that mediates the biosynthesis of neosartoricin B, a prenylated anthracenone that probably exhibits T-cell antiproliferative activity, suggestive of a physiological role as an immunosuppressive agent. The non-reducing polyketide synthase nscA probably synthesizes and cyclizes the decaketide backbone. The hydrolase nscB then mediates the product release through hydrolysis followed by spontaneous decarboxylation. The prenyltransferase nscD catalyzes the addition of the dimethylallyl group to the aromatic C5. The FAD-dependent monooxygenase nscC is then responsible for the stereospecific hydroxylation at C2. Neosartoricin B can be converted into two additional compounds neosartoricins C and D. Neosartoricin C is a spirocyclic compound that is cyclized through the attack of C3 hydroxyl on C14, followed by dehydration. On the other hand, neosartoricin D is a further cyclized compound in which attack of C2 on C14 in neosartoricin C results in the formation of the acetal-containing dioxabicyclo-octanone ring. Both of these compounds are novel and possibly represent related metabolites of the gene cluster. This is FAD-dependent monooxygenase nscC from Trichophyton equinum (strain ATCC MYA-4606 / CBS 127.97) (Horse ringworm fungus).